We begin with the raw amino-acid sequence, 634 residues long: Threonine--tRNA ligase (634 aa).

An editing domain region spans residues 1–142 (MQLLLIHSDY…LSRSIRPEGA (142 aa)). The catalytic stretch occupies residues 214–513 (PHVELMRRLE…TEEGKVPMLP (300 aa)). Cys-306, His-358, and His-482 together coordinate Zn(2+).

It belongs to the class-II aminoacyl-tRNA synthetase family. Homodimer. Requires Zn(2+) as cofactor.

The protein resides in the cytoplasm. It carries out the reaction tRNA(Thr) + L-threonine + ATP = L-threonyl-tRNA(Thr) + AMP + diphosphate + H(+). In terms of biological role, catalyzes the attachment of threonine to tRNA(Thr) in a two-step reaction: L-threonine is first activated by ATP to form Thr-AMP and then transferred to the acceptor end of tRNA(Thr). Edits incorrectly charged L-seryl-tRNA(Thr) probably via its editing domain (tested with total bovine tRNA). Activates L-serine, but does not detectably transfer it to tRNA (tested with total bovine tRNA). The protein is Threonine--tRNA ligase of Methanosarcina mazei (strain ATCC BAA-159 / DSM 3647 / Goe1 / Go1 / JCM 11833 / OCM 88) (Methanosarcina frisia).